Consider the following 207-residue polypeptide: Large ribosomal subunit protein uL3 (207 aa).

Positions 119–143 (GFQGSIKRNGQHRGPMAHGSRYHRR) are disordered.

This sequence belongs to the universal ribosomal protein uL3 family. As to quaternary structure, part of the 50S ribosomal subunit. Forms a cluster with proteins L14 and L19.

In terms of biological role, one of the primary rRNA binding proteins, it binds directly near the 3'-end of the 23S rRNA, where it nucleates assembly of the 50S subunit. The polypeptide is Large ribosomal subunit protein uL3 (Ligilactobacillus salivarius (strain UCC118) (Lactobacillus salivarius)).